We begin with the raw amino-acid sequence, 526 residues long: Peptide chain release factor 3 (526 aa).

Residues 8–277 (GKRRTFAIIS…GLTDWAPAPQ (270 aa)) form the tr-type G domain. Residues 17-24 (SHPDAGKT), 85-89 (DTPGH), and 139-142 (NKLD) contribute to the GTP site.

This sequence belongs to the TRAFAC class translation factor GTPase superfamily. Classic translation factor GTPase family. PrfC subfamily.

It is found in the cytoplasm. Its function is as follows. Increases the formation of ribosomal termination complexes and stimulates activities of RF-1 and RF-2. It binds guanine nucleotides and has strong preference for UGA stop codons. It may interact directly with the ribosome. The stimulation of RF-1 and RF-2 is significantly reduced by GTP and GDP, but not by GMP. This Aliivibrio fischeri (strain MJ11) (Vibrio fischeri) protein is Peptide chain release factor 3.